The following is a 144-amino-acid chain: Mediator of RNA polymerase II transcription subunit 21 (144 aa).

It belongs to the Mediator complex subunit 21 family. In terms of assembly, component of the Mediator complex, which is composed of MED1, MED4, MED6, MED7, MED8, MED9, MED10, MED11, MED12, MED13, MED13L, MED14, MED15, MED16, MED17, MED18, MED19, MED20, MED21, MED22, MED23, MED24, MED25, MED26, MED27, MED29, MED30, MED31, CCNC, CDK8 and CDC2L6/CDK11. The MED12, MED13, CCNC and CDK8 subunits form a distinct module termed the CDK8 module. Mediator containing the CDK8 module is less active than Mediator lacking this module in supporting transcriptional activation. Individual preparations of the Mediator complex lacking one or more distinct subunits have been variously termed ARC, CRSP, DRIP, PC2, SMCC and TRAP. Interacts with PPARG. Interacts with THRA in a ligand-dependent fashion.

The protein localises to the nucleus. Component of the Mediator complex, a coactivator involved in the regulated transcription of nearly all RNA polymerase II-dependent genes. Mediator functions as a bridge to convey information from gene-specific regulatory proteins to the basal RNA polymerase II transcription machinery. Mediator is recruited to promoters by direct interactions with regulatory proteins and serves as a scaffold for the assembly of a functional preinitiation complex with RNA polymerase II and the general transcription factors. The polypeptide is Mediator of RNA polymerase II transcription subunit 21 (MED21) (Pongo abelii (Sumatran orangutan)).